Reading from the N-terminus, the 244-residue chain is 15,16-dihydrobiliverdin:ferredoxin oxidoreductase (244 aa).

The protein belongs to the HY2 family.

The catalysed reaction is 15,16-dihydrobiliverdin + oxidized 2[4Fe-4S]-[ferredoxin] = biliverdin IXalpha + reduced 2[4Fe-4S]-[ferredoxin] + 2 H(+). In terms of biological role, catalyzes the two-electron reduction of biliverdin IX-alpha at the C15 methine bridge. The protein is 15,16-dihydrobiliverdin:ferredoxin oxidoreductase (pebA) of Gloeobacter violaceus (strain ATCC 29082 / PCC 7421).